A 124-amino-acid chain; its full sequence is Testis-expressed protein 54 (124 aa).

Basic and acidic residues predominate over residues 1–10 (MGCCQDKDFE). 2 disordered regions span residues 1 to 77 (MGCC…SNES) and 90 to 124 (FGRR…PEKG). A compositionally biased stretch (acidic residues) spans 11-30 (MSDEQSKEEESEDGREDETT). Composition is skewed to basic and acidic residues over residues 34-50 (RGPR…RGEL) and 101-124 (RQPD…PEKG).

Expressed in Testis.

This is Testis-expressed protein 54 from Homo sapiens (Human).